Consider the following 88-residue polypeptide: Long neurotoxin LNTX-2 (88 aa).

Positions 1-21 (MKTLLLTLVVVTIVCLDFGYA) are cleaved as a signal peptide. 4 disulfide bridges follow: C24–C42, C35–C63, C67–C78, and C79–C84.

It belongs to the three-finger toxin family. Long-chain subfamily. Type II alpha-neurotoxin sub-subfamily. In terms of tissue distribution, expressed by the venom gland.

Its subcellular location is the secreted. Binds with high affinity to muscular nicotinic acetylcholine receptors (nAChRs), whereas it binds with a low affinity to neuronal alpha-7/CHRNA7 nAChRs. This Demansia vestigiata (Lesser black whip snake) protein is Long neurotoxin LNTX-2.